The chain runs to 335 residues: Phosphate acyltransferase (335 aa).

Belongs to the PlsX family. As to quaternary structure, homodimer. Probably interacts with PlsY.

It localises to the cytoplasm. The catalysed reaction is a fatty acyl-[ACP] + phosphate = an acyl phosphate + holo-[ACP]. Its pathway is lipid metabolism; phospholipid metabolism. Catalyzes the reversible formation of acyl-phosphate (acyl-PO(4)) from acyl-[acyl-carrier-protein] (acyl-ACP). This enzyme utilizes acyl-ACP as fatty acyl donor, but not acyl-CoA. This Alkaliphilus oremlandii (strain OhILAs) (Clostridium oremlandii (strain OhILAs)) protein is Phosphate acyltransferase.